We begin with the raw amino-acid sequence, 594 residues long: CDPK-related kinase 4 (594 aa).

The segment at 1–131 is disordered; the sequence is MGHCYSRNIS…DSGGGERLDK (131 aa). Residue Gly2 is the site of N-myristoyl glycine attachment. Positions 37-58 are enriched in polar residues; the sequence is IPQSPVASGTPEVNSYNISPFQ. Positions 116–131 are enriched in basic and acidic residues; it reads VVDHGGDSGGGERLDK. Residues 143 to 405 enclose the Protein kinase domain; the sequence is YELGKEVGRG…AAQALAHPWL (263 aa). ATP-binding positions include 149–157 and Lys175; that span reads VGRGHFGHT. Asp271 functions as the Proton acceptor in the catalytic mechanism. Phosphoserine is present on Ser311. The interval 409 to 439 is autoinhibitory domain; that stretch reads NPGLLLDFSVYKLVKSYIRASPFRRSALKAL. The calmodulin binding (CaMBD) stretch occupies residues 428-448; it reads ASPFRRSALKALSKAIPDEEL. 4 EF-hand domains span residues 446–481, 482–517, 518–557, and 558–587; these read EELV…ATDA, MMES…VYQL, EALE…GPSA, and YPLL…VTVR. Residues Asp462, Lys501, Glu506, Asn539, Glu546, Ser567, Asp569, and Lys571 each coordinate Ca(2+). Residue Ser573 is modified to Phosphoserine.

It belongs to the protein kinase superfamily. Ser/Thr protein kinase family. CDPK subfamily. In terms of assembly, binds calmodulin (CaM) in a calcium-dependent manner. In terms of processing, autophosphorylated.

The protein resides in the cell membrane. The enzyme catalyses L-seryl-[protein] + ATP = O-phospho-L-seryl-[protein] + ADP + H(+). The catalysed reaction is L-threonyl-[protein] + ATP = O-phospho-L-threonyl-[protein] + ADP + H(+). Its activity is regulated as follows. Activated by calcium and calmodulin. Autophosphorylation may play an important role in the regulation of the kinase activity. In terms of biological role, may play a role in signal transduction pathways that involve calcium as a second messenger. The sequence is that of CDPK-related kinase 4 (CRK4) from Arabidopsis thaliana (Mouse-ear cress).